A 282-amino-acid chain; its full sequence is Probable endonuclease 4 (282 aa).

Residues histidine 66, histidine 106, glutamate 143, aspartate 176, histidine 179, histidine 213, aspartate 226, histidine 228, and glutamate 258 each contribute to the Zn(2+) site.

It belongs to the AP endonuclease 2 family. Requires Zn(2+) as cofactor.

The enzyme catalyses Endonucleolytic cleavage to 5'-phosphooligonucleotide end-products.. Its function is as follows. Endonuclease IV plays a role in DNA repair. It cleaves phosphodiester bonds at apurinic or apyrimidinic (AP) sites, generating a 3'-hydroxyl group and a 5'-terminal sugar phosphate. The chain is Probable endonuclease 4 from Aquifex aeolicus (strain VF5).